Consider the following 201-residue polypeptide: FMN-dependent NADH:quinone oxidoreductase (201 aa).

Residues Ser-10, 16–18 (SQS), 96–99 (MYNF), and 140–143 (SRGG) contribute to the FMN site.

This sequence belongs to the azoreductase type 1 family. In terms of assembly, homodimer. Requires FMN as cofactor.

It catalyses the reaction 2 a quinone + NADH + H(+) = 2 a 1,4-benzosemiquinone + NAD(+). The catalysed reaction is N,N-dimethyl-1,4-phenylenediamine + anthranilate + 2 NAD(+) = 2-(4-dimethylaminophenyl)diazenylbenzoate + 2 NADH + 2 H(+). In terms of biological role, quinone reductase that provides resistance to thiol-specific stress caused by electrophilic quinones. Its function is as follows. Also exhibits azoreductase activity. Catalyzes the reductive cleavage of the azo bond in aromatic azo compounds to the corresponding amines. In Salmonella arizonae (strain ATCC BAA-731 / CDC346-86 / RSK2980), this protein is FMN-dependent NADH:quinone oxidoreductase.